The sequence spans 579 residues: Type IV pilus assembly ATPase PilB (579 aa).

340–345 (GSGKTV) is an ATP binding site. The Zn(2+) site is built by Cys470, Cys473, Cys507, and Cys510.

It belongs to the GSP E family. In terms of assembly, interacts with CpiA.

The protein resides in the cytoplasm. With respect to regulation, inhibited by the inhibitory protein CpiA. In terms of biological role, ATPase component of the type IV pilus (T4P). Acts as a molecular motor to provide the energy that is required for biogenesis of the pilus and the extrusion of substrates generated in the cytoplasm. PilB is required for optimal T4P extension and, consequently, efficient natural transformation. May promote processive T4P extension. The chain is Type IV pilus assembly ATPase PilB from Acinetobacter baylyi (strain ATCC 33305 / BD413 / ADP1).